Consider the following 495-residue polypeptide: Pentatricopeptide repeat-containing protein PPR5 homolog, chloroplastic (495 aa).

A disordered region spans residues 1–24; the sequence is MLAYPTTSSPWPPRHHGAAAAPAA. A chloroplast-targeting transit peptide spans 1–29; that stretch reads MLAYPTTSSPWPPRHHGAAAAPAARRHMA. PPR repeat units follow at residues 120–154, 155–189, 195–229, 230–264, 265–299, 300–334, 335–365, 370–404, and 405–439; these read DNGI…GCRP, DTSV…MKTI, NIVT…PVSP, DIYT…QCRP, DVIT…KEKP, THPT…GFKP, NYVT…LVSS, HLSS…GAVP, and SAST…GIVP. Positions 455–495 are disordered; that stretch reads DKKPRTVPSKNSASKPDVESANNSGTDTSSKPNLSVWQVAA. Over residues 462–495 the composition is skewed to polar residues; that stretch reads PSKNSASKPDVESANNSGTDTSSKPNLSVWQVAA.

Belongs to the PPR family. P subfamily.

Its subcellular location is the plastid. The protein localises to the chloroplast. Its function is as follows. Involved in the biogenesis of the plastid translation machinery by promoting the splicing of group II introns in chloroplasts. The chain is Pentatricopeptide repeat-containing protein PPR5 homolog, chloroplastic from Oryza sativa subsp. japonica (Rice).